Consider the following 379-residue polypeptide: Tryptophan--tRNA ligase, mitochondrial (379 aa).

ATP-binding positions include Gln-42 and 48 to 51 (HLGN). A 'HIGH' region motif is present at residues 43-51 (PTGCFHLGN). Asp-184 is an L-tryptophan binding site. ATP contacts are provided by residues 196 to 198 (GDD), Val-235, 244 to 248 (KMSKS), and Lys-247. Positions 244 to 248 (KMSKS) match the 'KMSKS' region motif.

Belongs to the class-I aminoacyl-tRNA synthetase family. As to quaternary structure, homodimer.

The protein resides in the mitochondrion matrix. It carries out the reaction tRNA(Trp) + L-tryptophan + ATP = L-tryptophyl-tRNA(Trp) + AMP + diphosphate + H(+). Functionally, mitochondrial aminoacyl-tRNA synthetase that catalyzes the attachment of tryptophan to tRNA(Trp). The chain is Tryptophan--tRNA ligase, mitochondrial (MSW1) from Saccharomyces cerevisiae (strain ATCC 204508 / S288c) (Baker's yeast).